The following is a 456-amino-acid chain: Phosphomethylpyrimidine synthase (456 aa).

Substrate-binding positions include Asn-80, Met-109, Tyr-139, His-175, 195-197, 236-239, and Glu-275; these read SRG and DSLR. His-279 lines the Zn(2+) pocket. Substrate is bound at residue Tyr-302. His-343 contacts Zn(2+). Residues Cys-423, Cys-426, and Cys-431 each coordinate [4Fe-4S] cluster.

Belongs to the ThiC family. [4Fe-4S] cluster is required as a cofactor.

It carries out the reaction 5-amino-1-(5-phospho-beta-D-ribosyl)imidazole + S-adenosyl-L-methionine = 4-amino-2-methyl-5-(phosphooxymethyl)pyrimidine + CO + 5'-deoxyadenosine + formate + L-methionine + 3 H(+). The protein operates within cofactor biosynthesis; thiamine diphosphate biosynthesis. Functionally, catalyzes the synthesis of the hydroxymethylpyrimidine phosphate (HMP-P) moiety of thiamine from aminoimidazole ribotide (AIR) in a radical S-adenosyl-L-methionine (SAM)-dependent reaction. The sequence is that of Phosphomethylpyrimidine synthase from Prochlorococcus marinus (strain AS9601).